The following is a 155-amino-acid chain: RxLR effector protein 24 (155 aa).

A signal peptide spans 1–21; the sequence is MRLLIWVLFVTLVTFVSNTTA. A RxLR-dEER motif is present at residues 52–78; sequence RFLRTESKNDLKSDADTNGIDIEDEER. The segment at 105–155 is RABA-binding domain; the sequence is EKAFQRMNQKGETPTTLAKRLDIGKTAEKRFEKTYEKYTAWWINHHTNAGT.

Belongs to the RxLR effector family. In terms of assembly, interacts with Arabidopsis thaliana RABA GTPases including RABA1a, RABA1b, RABA1c, RABA1d, RABA1f, RABA2a, RABA2c, RABA2d, RABA4a, RABA4b and RABA4c.

It is found in the secreted. Its subcellular location is the host cell membrane. It localises to the host endomembrane system. In terms of biological role, effector protein that contributes to pathogen virulence. Targets members of the RABA GTPases subfamily to inhibit vesicular secretion, leading to an accumulation of secretory proteins in the endoplasmic reticulum. The protein is RxLR effector protein 24 of Phytophthora brassicae.